The sequence spans 300 residues: UDP-3-O-acyl-N-acetylglucosamine deacetylase (300 aa).

Zn(2+) contacts are provided by His-76, His-235, and Asp-239. His-262 acts as the Proton donor in catalysis.

The protein belongs to the LpxC family. The cofactor is Zn(2+).

It catalyses the reaction a UDP-3-O-[(3R)-3-hydroxyacyl]-N-acetyl-alpha-D-glucosamine + H2O = a UDP-3-O-[(3R)-3-hydroxyacyl]-alpha-D-glucosamine + acetate. The protein operates within glycolipid biosynthesis; lipid IV(A) biosynthesis; lipid IV(A) from (3R)-3-hydroxytetradecanoyl-[acyl-carrier-protein] and UDP-N-acetyl-alpha-D-glucosamine: step 2/6. In terms of biological role, catalyzes the hydrolysis of UDP-3-O-myristoyl-N-acetylglucosamine to form UDP-3-O-myristoylglucosamine and acetate, the committed step in lipid A biosynthesis. The chain is UDP-3-O-acyl-N-acetylglucosamine deacetylase from Halorhodospira halophila (strain DSM 244 / SL1) (Ectothiorhodospira halophila (strain DSM 244 / SL1)).